We begin with the raw amino-acid sequence, 589 residues long: Kelch-like protein 25 (589 aa).

The region spanning 46 to 114 (TDVTLWAGDR…AYSSRIVINE (69 aa)) is the BTB domain. The BACK domain maps to 149–250 (CLGMMVLSDA…LPSDCLKNAV (102 aa)). Kelch repeat units follow at residues 296–340 (TLLI…AIGC), 341–388 (KVYV…ELEN), 389–444 (CLYV…SAKL), 446–492 (LFVF…VLGS), 493–538 (QIFI…ASGN), and 539–585 (KLYV…STWK).

Component of the BCR(KLHL25) E3 ubiquitin ligase complex, at least composed of CUL3, KLHL25 and RBX1.

The protein operates within protein modification; protein ubiquitination. Substrate-specific adapter of a BCR (BTB-CUL3-RBX1) E3 ubiquitin ligase complex involved in various processes, such as translation homeostasis and lipid synthesis. The BCR(KLHL25) ubiquitin ligase complex acts by mediating ubiquitination of hypophosphorylated EIF4EBP1 (4E-BP1): ubiquitination and subsequent degradation of hypophosphorylated EIF4EBP1 (4E-BP1) probably serves as a homeostatic mechanism to maintain translation and prevent eIF4E inhibition when eIF4E levels are low. The BCR(KLHL25) complex does not target EIF4EBP1 (4E-BP1) when it is hyperphosphorylated or associated with eIF4E. The BCR(KLHL25) complex also acts as a regulator of lipid synthesis by mediating ubiquitination and degradation of ACLY, thereby inhibiting lipid synthesis. BCR(KLHL25)-mediated degradation of ACLY promotes fatty acid oxidation and is required for differentiation of inducible regulatory T (iTreg) cells. This Mus musculus (Mouse) protein is Kelch-like protein 25.